The primary structure comprises 122 residues: Acidic phospholipase A2 4 (122 aa).

Disulfide bonds link C26–C115, C28–C44, C43–C95, C49–C122, C50–C88, C57–C81, and C75–C86. Residues F27, G29, and G31 each contribute to the Ca(2+) site. H47 is a catalytic residue. Ca(2+) is bound at residue D48. D89 is an active-site residue.

The protein belongs to the phospholipase A2 family. Group II subfamily. D49 sub-subfamily. Ca(2+) serves as cofactor. In terms of tissue distribution, expressed by the venom gland.

It localises to the secreted. It carries out the reaction a 1,2-diacyl-sn-glycero-3-phosphocholine + H2O = a 1-acyl-sn-glycero-3-phosphocholine + a fatty acid + H(+). In terms of biological role, snake venom phospholipase A2 (PLA2) that has high lipolytic activity. PLA2 catalyzes the calcium-dependent hydrolysis of the 2-acyl groups in 3-sn-phosphoglycerides. The sequence is that of Acidic phospholipase A2 4 from Craspedocephalus gramineus (Bamboo pit viper).